The sequence spans 450 residues: Phosphoglucosamine mutase (450 aa).

Ser-101 acts as the Phosphoserine intermediate in catalysis. Positions 101, 242, 244, and 246 each coordinate Mg(2+). A Phosphoserine modification is found at Ser-101.

It belongs to the phosphohexose mutase family. Mg(2+) is required as a cofactor. Activated by phosphorylation.

The enzyme catalyses alpha-D-glucosamine 1-phosphate = D-glucosamine 6-phosphate. In terms of biological role, catalyzes the conversion of glucosamine-6-phosphate to glucosamine-1-phosphate. In Rhodopseudomonas palustris (strain HaA2), this protein is Phosphoglucosamine mutase.